The following is a 519-amino-acid chain: MGGGGDTTDTNMMQRVNSSSGTSSSSIPKHNLHLNPALIRSHHHFRHPFTGAPPPPIPPISPYSQIPATLQPRHSRSMSQPSSFFSFDSLPPLNPSAPSVSVSVEEKTGAGFSPSLPPSPFTMCHSSSSRNAGDGENLPPRKSHRRSNSDVTFGFSSMMSQNQKSPPLSSLERSISGEDTSDWSNLVKKEPREGFYKGRKPEVEAAMDDVFTAYMNLDNIDVLNSFGGEDGKNGNENVEEMESSRGSGTKKTNGGSSSDSEGDSSASGNVKVALSSSSSGVKRRAGGDIAPTGRHYRSVSMDSCFMGKLNFGDESSLKLPPSSSAKVSPTNSGEGNSSAYSVEFGNSEFTAAEMKKIAADEKLAEIVMADPKRVKRILANRVSAARSKERKTRYMAELEHKVQTLQTEATTLSAQLTHLQRDSMGLTNQNSELKFRLQAMEQQAQLRDALSEKLNEEVQRLKLVIGEPNRRQSGSSSSESKMSLNPEMFQQLSISQLQHQQMQHSNQCSTMKAKHTSND.

Disordered regions lie at residues 1–30, 45–83, 108–202, 222–295, and 315–339; these read MGGG…IPKH, FRHP…QPSS, TGAG…RKPE, VLNS…TGRH, and SSLK…NSSA. Pro residues predominate over residues 51 to 61; it reads GAPPPPIPPIS. Residues 149 to 173 are compositionally biased toward polar residues; that stretch reads SDVTFGFSSMMSQNQKSPPLSSLER. Residues 187–202 show a composition bias toward basic and acidic residues; it reads VKKEPREGFYKGRKPE. Composition is skewed to low complexity over residues 244–268 and 317–329; these read SRGS…SASG and LKLP…KVSP. Over residues 330-339 the composition is skewed to polar residues; it reads TNSGEGNSSA. Residues 372 to 393 are basic motif; sequence KRVKRILANRVSAARSKERKTR. Residues 386-460 adopt a coiled-coil conformation; the sequence is RSKERKTRYM…SEKLNEEVQR (75 aa). A leucine-zipper region spans residues 398 to 433; the sequence is LEHKVQTLQTEATTLSAQLTHLQRDSMGLTNQNSEL. The segment at 465–519 is disordered; the sequence is IGEPNRRQSGSSSSESKMSLNPEMFQQLSISQLQHQQMQHSNQCSTMKAKHTSND. Low complexity-rich tracts occupy residues 473 to 483 and 490 to 509; these read SGSSSSESKMS and QQLS…NQCS.

Interacts with WUS, HEC1, KNAT1, KNAT2, HAT1, BEL1, and NGA1. In terms of tissue distribution, expressed in inflorescence meristem, floral organ primordia, gynoecia, ovules and carpel margin meristem.

It localises to the nucleus. In terms of biological role, transcription factor that acts as a repressor of reproductive development, meristem size and plant growth. Acts as a transcriptional repressor in inflorescence tissues. Interacts with well known regulators of meristem and gynoecium development such as WUS, HEC1, KNAT1, KNAT2, HAT1, BEL1 and NGA1. Acts as a positive regulator of JAG and OFP1 expression in developing gynoecia. The sequence is that of bZIP transcription factor 30 from Arabidopsis thaliana (Mouse-ear cress).